We begin with the raw amino-acid sequence, 172 residues long: Adenine phosphoribosyltransferase (172 aa).

This sequence belongs to the purine/pyrimidine phosphoribosyltransferase family. As to quaternary structure, homodimer.

The protein resides in the cytoplasm. It carries out the reaction AMP + diphosphate = 5-phospho-alpha-D-ribose 1-diphosphate + adenine. Its pathway is purine metabolism; AMP biosynthesis via salvage pathway; AMP from adenine: step 1/1. Its function is as follows. Catalyzes a salvage reaction resulting in the formation of AMP, that is energically less costly than de novo synthesis. The polypeptide is Adenine phosphoribosyltransferase (Staphylococcus epidermidis (strain ATCC 35984 / DSM 28319 / BCRC 17069 / CCUG 31568 / BM 3577 / RP62A)).